A 661-amino-acid polypeptide reads, in one-letter code: Polyadenylate-binding protein, cytoplasmic and nuclear (661 aa).

Residues 1-11 (MSAAETNQVQE) are compositionally biased toward polar residues. The tract at residues 1–61 (MSAAETNQVQ…SAEEQGESSG (61 aa)) is disordered. Low complexity predominate over residues 20–51 (SSSSPAAGGATTATTTNNAESSDATSSSVPAD). 4 RRM domains span residues 67 to 145 (ASLY…WSQR), 155 to 232 (GNIF…KHVS), 248 to 325 (TNIY…RAQK), and 351 to 428 (VNLF…LAQR). The tract at residues 473–563 (FPPNGRGNAP…PNRPAGGNVP (91 aa)) is disordered. A compositionally biased stretch (pro residues) spans 501-511 (EQWPRPGPNGQ). Residues 523-532 (QDFNGQNMRP) show a composition bias toward polar residues. Residues 533-549 (QQQQQQQQQQQQQQQQQ) show a composition bias toward low complexity. Residues 563 to 644 (PAKDLAALIA…ALNAFEEYKN (82 aa)) enclose the PABC domain.

Belongs to the polyadenylate-binding protein type-1 family.

The protein localises to the cytoplasm. It is found in the nucleus. Its function is as follows. Binds the poly(A) tail of mRNA. Appears to be an important mediator of the multiple roles of the poly(A) tail in mRNA biogenesis, stability and translation. In the nucleus, involved in both mRNA cleavage and polyadenylation. Is also required for efficient mRNA export to the cytoplasm. Acts in concert with a poly(A)-specific nuclease (PAN) to affect poly(A) tail shortening, which may occur concomitantly with either nucleocytoplasmic mRNA transport or translational initiation. In the cytoplasm, stimulates translation initiation and regulates mRNA decay through translation termination-coupled poly(A) shortening, probably mediated by PAN. This chain is Polyadenylate-binding protein, cytoplasmic and nuclear (PAB1), found in Lodderomyces elongisporus (strain ATCC 11503 / CBS 2605 / JCM 1781 / NBRC 1676 / NRRL YB-4239) (Yeast).